The chain runs to 204 residues: Casparian strip membrane protein 2 (204 aa).

Over 1 to 42 (MKNESTFIDVPAESSSAMKGKAPLIGVARDHTTSGSGGYNRG) the chain is Cytoplasmic. Residues 43-63 (LAIFDFLLRLAAIVAALAAAA) form a helical membrane-spanning segment. The Extracellular segment spans residues 64-92 (TMGTSDETLPFFTQFLQFEASYDDLPTFQ). A helical membrane pass occupies residues 93–113 (FFVIAMALVGGYLVLSLPISV). Over 114–125 (VTILRPLATAPR) the chain is Cytoplasmic. The helical transmembrane segment at 126–146 (LLLLVLDTGVLALNTAAASSA) threads the bilayer. Topologically, residues 147 to 178 (AAISYLAHSGNQNTNWLPICQQFGDFCQKSSG) are extracellular. Residues 179–199 (AVVSAFVSVVFFTILVVISGV) traverse the membrane as a helical segment. Topologically, residues 200–204 (ALKRH) are cytoplasmic.

The protein belongs to the Casparian strip membrane proteins (CASP) family. Homodimer and heterodimers with other CASP proteins. Interacts with CASP1, CASP3 and CASP4.

It localises to the cell membrane. In terms of biological role, regulates membrane-cell wall junctions and localized cell wall deposition. Required for establishment of the Casparian strip membrane domain (CSD) and the subsequent formation of Casparian strips, a cell wall modification of the root endodermis that determines an apoplastic barrier between the intraorganismal apoplasm and the extraorganismal apoplasm and prevents lateral diffusion. The protein is Casparian strip membrane protein 2 (CASP2) of Arabidopsis thaliana (Mouse-ear cress).